The chain runs to 323 residues: Thymidylate synthase (323 aa).

DUMP-binding positions include arginine 21 and 172 to 173; that span reads RR. The Nucleophile role is filled by cysteine 192. Residues 214-217, asparagine 225, and 255-257 contribute to the dUMP site; these read RSND and HVY. Position 217 (aspartate 217) interacts with (6R)-5,10-methylene-5,6,7,8-tetrahydrofolate. A (6R)-5,10-methylene-5,6,7,8-tetrahydrofolate-binding site is contributed by alanine 322.

This sequence belongs to the thymidylate synthase family. Bacterial-type ThyA subfamily. Homodimer.

Its subcellular location is the cytoplasm. It catalyses the reaction dUMP + (6R)-5,10-methylene-5,6,7,8-tetrahydrofolate = 7,8-dihydrofolate + dTMP. The protein operates within pyrimidine metabolism; dTTP biosynthesis. Catalyzes the reductive methylation of 2'-deoxyuridine-5'-monophosphate (dUMP) to 2'-deoxythymidine-5'-monophosphate (dTMP) while utilizing 5,10-methylenetetrahydrofolate (mTHF) as the methyl donor and reductant in the reaction, yielding dihydrofolate (DHF) as a by-product. This enzymatic reaction provides an intracellular de novo source of dTMP, an essential precursor for DNA biosynthesis. This Pseudomonas putida (strain ATCC 47054 / DSM 6125 / CFBP 8728 / NCIMB 11950 / KT2440) protein is Thymidylate synthase.